The chain runs to 182 residues: Adenine phosphoribosyltransferase (182 aa).

It belongs to the purine/pyrimidine phosphoribosyltransferase family. In terms of assembly, homodimer.

Its subcellular location is the cytoplasm. It carries out the reaction AMP + diphosphate = 5-phospho-alpha-D-ribose 1-diphosphate + adenine. It functions in the pathway purine metabolism; AMP biosynthesis via salvage pathway; AMP from adenine: step 1/1. Catalyzes a salvage reaction resulting in the formation of AMP, that is energically less costly than de novo synthesis. In Campylobacter fetus subsp. fetus (strain 82-40), this protein is Adenine phosphoribosyltransferase.